The chain runs to 130 residues: MKRSVIFVLLIFCALPVLCSQTSAPPKRHISCRFTQIWNIPSCYNKQSDLSEAWLYAIISVMVFCSTIFALAIYPYLDIGWNAIDAMNHPTFPVPAVIPLQQVIAPINQPRPPSPTPTEISYFNLTGGDD.

Residues 1–19 (MKRSVIFVLLIFCALPVLC) form the signal peptide. A helical membrane pass occupies residues 53–77 (AWLYAIISVMVFCSTIFALAIYPYL). Positions 122–125 (YFNL) are tyrosine-based sorting motif.

Belongs to the adenoviridae E3_RID-beta family. As to quaternary structure, interacts with E3 RID-alpha and E3 CR1-alpha. Post-translationally, phosphorylated on serine. O-glycosylated, but not N-glycosylated.

It localises to the host membrane. Functionally, prevents infected cell apoptosis induced by the host immune system. Acts by down-regulating a number of cell surface receptors in the tumor necrosis factor (TNF) receptor superfamily, namely FAS, TNFRSF10A/TRAIL receptor 1, and TNFRSF10B/TRAIL receptor 2. Down-regulation of these death receptors protects adenovirus-infected cells from apoptosis induced by the death receptor ligands Fas ligand and TRAIL. RID complex also down-regulates certain tyrosine kinase cell surface receptors, especially the epidermal growth factor receptor (EGFR). RID-mediated Fas and EGFR down-regulation occurs via endocytosis of the receptors into endosomes followed by transport to and degradation within lysosomes. The chain is Early 3 receptor internalization and degradation beta protein from Human adenovirus C serotype 2 (HAdV-2).